The primary structure comprises 112 residues: UPF0342 protein SP_1372 (112 aa).

Belongs to the UPF0342 family.

In Streptococcus pneumoniae serotype 4 (strain ATCC BAA-334 / TIGR4), this protein is UPF0342 protein SP_1372.